The following is a 104-amino-acid chain: SOSS complex subunit C (104 aa).

Ala-2 is modified (N-acetylalanine). Ser-50 carries the post-translational modification Phosphoserine.

The protein belongs to the SOSS-C family. Component of the SOSS complex, composed of SOSS-B (SOSS-B1/NABP2 or SOSS-B2/NABP1), SOSS-A/INTS3 and SOSS-C/INIP. SOSS complexes containing SOSS-B1/NABP2 are more abundant than complexes containing SOSS-B2/NABP1. Interacts with INTS3; the interaction is direct.

Its subcellular location is the nucleus. Its function is as follows. Component of the SOSS complex, a multiprotein complex that functions downstream of the MRN complex to promote DNA repair and G2/M checkpoint. The SOSS complex associates with single-stranded DNA at DNA lesions and influences diverse endpoints in the cellular DNA damage response including cell-cycle checkpoint activation, recombinational repair and maintenance of genomic stability. Required for efficient homologous recombination-dependent repair of double-strand breaks (DSBs) and ATM-dependent signaling pathways. This Homo sapiens (Human) protein is SOSS complex subunit C (INIP).